The chain runs to 911 residues: MAQLFLPLLAALVLAQAPAALADVLEGDSSEDRAFRVRIAGDAPLQGVLGGALTIPCHVHYLRPPPSRRAVLGSPRVKWTFLSRGREAEVLVARGVRVKVNEAYRFRVALPAYPASLTDVSLALSELRPNDSGIYRCEVQHGIDDSSDAVEVKVKGVVFLYREGSARYAFSFSGAQEACARIGAHIATPEQLYAAYLGGYEQCDAGWLSDQTVRYPIQTPREACYGDMDGFPGVRNYGVVDPDDLYDVYCYAEDLNGELFLGDPPEKLTLEEARAYCQERGAEIATTGQLYAAWDGGLDHCSPGWLADGSVRYPIVTPSQRCGGGLPGVKTLFLFPNQTGFPNKHSRFNVYCFRDSAQPSAIPEASNPASNPASDGLEAIVTVTETLEELQLPQEATESESRGAIYSIPIMEDGGGGSSTPEDPAEAPRTLLEFETQSMVPPTGFSEEEGKALEEEEKYEDEEEKEEEEEEEEVEDEALWAWPSELSSPGPEASLPTEPAAQEESLSQAPARAVLQPGASPLPDGESEASRPPRVHGPPTETLPTPRERNLASPSPSTLVEAREVGEATGGPELSGVPRGESEETGSSEGAPSLLPATRAPEGTRELEAPSEDNSGRTAPAGTSVQAQPVLPTDSASRGGVAVVPASGDCVPSPCHNGGTCLEEEEGVRCLCLPGYGGDLCDVGLRFCNPGWDAFQGACYKHFSTRRSWEEAETQCRMYGAHLASISTPEEQDFINNRYREYQWIGLNDRTIEGDFLWSDGVPLLYENWNPGQPDSYFLSGENCVVMVWHDQGQWSDVPCNYHLSYTCKMGLVSCGPPPELPLAQVFGRPRLRYEVDTVLRYRCREGLAQRNLPLIRCQENGRWEAPQISCVPRRPARALHPEEDPEGRQGRLLGRWKALLIPPSSPMPGP.

The N-terminal stretch at 1–22 (MAQLFLPLLAALVLAQAPAALA) is a signal peptide. In terms of domain architecture, Ig-like V-type spans 36-155 (RVRIAGDAPL…SSDAVEVKVK (120 aa)). Disulfide bonds link Cys57-Cys137, Cys179-Cys250, Cys203-Cys224, Cys277-Cys352, and Cys301-Cys322. N-linked (GlcNAc...) asparagine glycosylation occurs at Asn130. Link domains lie at 157-252 (VVFL…YCYA) and 257-354 (GELF…YCFR). A glycan (N-linked (GlcNAc...) asparagine) is linked at Asn337. The interval 391–641 (QLPQEATESE…PTDSASRGGV (251 aa)) is disordered. Position 418 is a phosphoserine (Ser418). Ser418 carries O-linked (Xyl...) (chondroitin sulfate) serine glycosylation. Residues 454–478 (EEEEKYEDEEEKEEEEEEEEVEDEA) are compositionally biased toward acidic residues. O-glycosylated at two sites stretches follow at residues 520–530 (SPLPDGESEAS) and 540–545 (TETLPT). An O-glycosylated at one site region spans residues 569 to 575 (TGGPELS). The segment covering 612–627 (EDNSGRTAPAGTSVQA) has biased composition (polar residues). A lipid anchor (GPI-anchor amidated alanine) is attached at Ala646. The 37-residue stretch at 646-682 (ASGDCVPSPCHNGGTCLEEEEGVRCLCLPGYGGDLCD) folds into the EGF-like domain. Intrachain disulfides connect Cys650/Cys661, Cys655/Cys670, Cys672/Cys681, Cys688/Cys699, Cys716/Cys808, Cys784/Cys800, Cys815/Cys858, and Cys844/Cys871. The region spanning 695-809 (FQGACYKHFS…CNYHLSYTCK (115 aa)) is the C-type lectin domain. Positions 813 to 873 (VSCGPPPELP…WEAPQISCVP (61 aa)) constitute a Sushi domain. Residues Ser905 and Ser906 are each glycosylated (O-linked (GalNAc...) serine).

It belongs to the aggrecan/versican proteoglycan family. In terms of assembly, interacts with TNR. In terms of processing, O-glycosylated; contains chondroitin sulfate. O-glycosylated with a core 1 or possibly core 8 glycan. In terms of tissue distribution, expressed in the retina, specifically in the inner nuclear layer, inner plexiform layer and ganglion cell layer (at protein level). Detected in cerebrospinal fluid (at protein level). Detected in urine (at protein level).

Its subcellular location is the secreted. The protein resides in the extracellular space. It localises to the extracellular matrix. It is found in the membrane. In terms of biological role, may play a role in the terminally differentiating and the adult nervous system during postnatal development. Could stabilize interactions between hyaluronan (HA) and brain proteoglycans. In Homo sapiens (Human), this protein is Brevican core protein (BCAN).